The chain runs to 379 residues: Cyclic dinucleotide synthase CdnE (379 aa).

Residues Gln-107, Ser-109, Asp-123, and Lys-179 each coordinate UTP. Asp-123 serves as a coordination point for Mg(2+). A Mg(2+)-binding site is contributed by Asp-193. Residues Asn-229, Lys-257, and Ser-274 each coordinate UTP. The short motif at 328 to 330 (KIF) is the Pyrimidine specificity motif (R/Q)xW in donor pocket element.

The protein belongs to the CD-NTase family. E02 subfamily. Mg(2+) is required as a cofactor.

The enzyme catalyses 2 UTP = c-di-UMP + 2 diphosphate. The catalysed reaction is UTP + ATP = 3',3'-cUAMP + 2 diphosphate. It carries out the reaction UTP + CTP = cyclic CMP-UMP + 2 diphosphate. In terms of biological role, cyclic nucleotide synthase (second messenger synthase) of a CBASS antivirus system. CBASS (cyclic oligonucleotide-based antiphage signaling system) provides immunity against bacteriophage. The CD-NTase protein synthesizes cyclic nucleotides in response to infection; these serve as specific second messenger signals. The signals activate a diverse range of effectors, leading to bacterial cell death and thus abortive phage infection. The effector protein for this system is membrane protein Cap15. A type I-B(UU) CBASS system. Its function is as follows. Cyclic dinucleotide synthase that preferentially catalyzes the synthesis of 3',3'-cyclic UMP-UMP (c-di-UMP) and 3',3'-cyclic UMP-AMP, with minor amounts of 3',3'-cyclic UMP-CMP, which are second messengers for cell signal transduction. Protects E.coli against phage infection. When the CBASS operon (cap15-cdnE) is introduced in E.coli MG1655 it protects against phages T2, T4, T5, T6, SECPhi4, SECPhi6, SECPhi17, SECPhi18 and SECPhi27, but not against phage T7. The polypeptide is Cyclic dinucleotide synthase CdnE (Yersinia aleksiciae).